We begin with the raw amino-acid sequence, 452 residues long: Cobyrinate a,c-diamide synthase (452 aa).

The region spanning 248 to 441 (RVAYALDAAF…LHIHFYQNPA (194 aa)) is the GATase cobBQ-type domain. Cysteine 330 functions as the Nucleophile in the catalytic mechanism.

The protein belongs to the CobB/CbiA family. Requires Mg(2+) as cofactor.

It carries out the reaction cob(II)yrinate + 2 L-glutamine + 2 ATP + 2 H2O = cob(II)yrinate a,c diamide + 2 L-glutamate + 2 ADP + 2 phosphate + 2 H(+). It functions in the pathway cofactor biosynthesis; adenosylcobalamin biosynthesis; cob(II)yrinate a,c-diamide from sirohydrochlorin (anaerobic route): step 10/10. In terms of biological role, catalyzes the ATP-dependent amidation of the two carboxylate groups at positions a and c of cobyrinate, using either L-glutamine or ammonia as the nitrogen source. The polypeptide is Cobyrinate a,c-diamide synthase (Listeria innocua serovar 6a (strain ATCC BAA-680 / CLIP 11262)).